The following is a 380-amino-acid chain: Flap endonuclease 1 (380 aa).

Positions 1-104 (MGIHGLAKLI…AELEKRGERR (104 aa)) are N-domain. A Mg(2+)-binding site is contributed by Asp-34. Arg-47 and Arg-70 together coordinate DNA. Residues Asp-86, Glu-158, Glu-160, Asp-179, and Asp-181 each coordinate Mg(2+). The I-domain stretch occupies residues 122 to 253 (NIDKFSKRLV…KRAIDLIRQH (132 aa)). DNA is bound at residue Glu-158. DNA contacts are provided by Gly-231 and Asp-233. Asp-233 serves as a coordination point for Mg(2+). The disordered stretch occupies residues 327 to 380 (KMMKSRQGSTQGRLDSFFSVTGSLSSKRKEPETKGSAKKKQKTGATPGKFRKGK). Positions 332–351 (RQGSTQGRLDSFFSVTGSLS) are enriched in polar residues. The interval 336–344 (TQGRLDSFF) is interaction with PCNA.

It belongs to the XPG/RAD2 endonuclease family. FEN1 subfamily. In terms of assembly, interacts with PCNA. Three molecules of fen1 bind to one PCNA trimer with each molecule binding to one PCNA monomer. PCNA stimulates the nuclease activity without altering cleavage specificity. Mg(2+) serves as cofactor. In terms of processing, phosphorylated. Phosphorylation upon DNA damage induces relocalization to the nuclear plasma.

It localises to the nucleus. Its subcellular location is the nucleolus. It is found in the nucleoplasm. The protein localises to the mitochondrion. Functionally, structure-specific nuclease with 5'-flap endonuclease and 5'-3' exonuclease activities involved in DNA replication and repair. During DNA replication, cleaves the 5'-overhanging flap structure that is generated by displacement synthesis when DNA polymerase encounters the 5'-end of a downstream Okazaki fragment. It enters the flap from the 5'-end and then tracks to cleave the flap base, leaving a nick for ligation. Also involved in the long patch base excision repair (LP-BER) pathway, by cleaving within the apurinic/apyrimidinic (AP) site-terminated flap. Acts as a genome stabilization factor that prevents flaps from equilibrating into structures that lead to duplications and deletions. Also possesses 5'-3' exonuclease activity on nicked or gapped double-stranded DNA, and exhibits RNase H activity. Also involved in replication and repair of rDNA and in repairing mitochondrial DNA. This chain is Flap endonuclease 1 (fen1), found in Xiphophorus maculatus (Southern platyfish).